A 289-amino-acid polypeptide reads, in one-letter code: Cbb3-type cytochrome c oxidase subunit FixP (289 aa).

At 1 to 33 (MADKHKHVDEVSGVETTGHEWDGIRELNNPMPR) the chain is on the cytoplasmic side. The helical transmembrane segment at 34–56 (WWVYSFYATIIWAIGYAIAYPSW) threads the bilayer. Residues 57-289 (PMLTEATKGM…VFVHSLGGGE (233 aa)) are Periplasmic-facing. Cytochrome c domains lie at 110 to 198 (FAVS…VSLT) and 205 to 286 (HLVQ…HSLG). Cysteine 123, cysteine 126, histidine 127, methionine 175, cysteine 218, cysteine 221, histidine 222, and methionine 263 together coordinate heme c.

It belongs to the CcoP / FixP family. Component of the cbb3-type cytochrome c oxidase at least composed of FixN, FixO, FixQ and FixP. It depends on heme c as a cofactor.

The protein localises to the cell inner membrane. It functions in the pathway energy metabolism; oxidative phosphorylation. In terms of biological role, C-type cytochrome. Part of the cbb3-type cytochrome c oxidase complex. FixP subunit is required for transferring electrons from donor cytochrome c via its heme groups to FixO subunit. From there, electrons are shuttled to the catalytic binuclear center of FixN subunit where oxygen reduction takes place. The complex also functions as a proton pump. This chain is Cbb3-type cytochrome c oxidase subunit FixP, found in Rhizobium meliloti (strain 1021) (Ensifer meliloti).